Consider the following 243-residue polypeptide: Triosephosphate isomerase (243 aa).

Substrate is bound at residue 9–11 (NWK). Histidine 96 serves as the catalytic Electrophile. Glutamate 165 serves as the catalytic Proton acceptor. Substrate-binding positions include glycine 171, serine 204, and 225 to 226 (GG).

It belongs to the triosephosphate isomerase family. As to quaternary structure, homodimer.

It is found in the cytoplasm. The catalysed reaction is D-glyceraldehyde 3-phosphate = dihydroxyacetone phosphate. It participates in carbohydrate biosynthesis; gluconeogenesis. Its pathway is carbohydrate degradation; glycolysis; D-glyceraldehyde 3-phosphate from glycerone phosphate: step 1/1. Its function is as follows. Involved in the gluconeogenesis. Catalyzes stereospecifically the conversion of dihydroxyacetone phosphate (DHAP) to D-glyceraldehyde-3-phosphate (G3P). The protein is Triosephosphate isomerase of Nostoc punctiforme (strain ATCC 29133 / PCC 73102).